Consider the following 233-residue polypeptide: Aspartate/glutamate leucyltransferase (233 aa).

This sequence belongs to the R-transferase family. Bpt subfamily.

It is found in the cytoplasm. It carries out the reaction N-terminal L-glutamyl-[protein] + L-leucyl-tRNA(Leu) = N-terminal L-leucyl-L-glutamyl-[protein] + tRNA(Leu) + H(+). It catalyses the reaction N-terminal L-aspartyl-[protein] + L-leucyl-tRNA(Leu) = N-terminal L-leucyl-L-aspartyl-[protein] + tRNA(Leu) + H(+). Functionally, functions in the N-end rule pathway of protein degradation where it conjugates Leu from its aminoacyl-tRNA to the N-termini of proteins containing an N-terminal aspartate or glutamate. This chain is Aspartate/glutamate leucyltransferase, found in Vibrio campbellii (strain ATCC BAA-1116).